Reading from the N-terminus, the 348-residue chain is Erlin-1 (348 aa).

Residues 1 to 7 (MNMTQAR) are Cytoplasmic-facing. The helical transmembrane segment at 8-28 (VLVAAVVGLVAVLLYASIHKI) threads the bilayer. Over 29-348 (EEGHLAVYYR…NVIQNKESTG (320 aa)) the chain is Lumenal. An N-linked (GlcNAc...) asparagine glycan is attached at asparagine 108. Residue lysine 269 is modified to N6-acetyllysine. Residues 325–348 (SSLPSKEALEPSGENVIQNKESTG) form a disordered region. Residues 339-348 (NVIQNKESTG) are compositionally biased toward polar residues.

It belongs to the band 7/mec-2 family. As to quaternary structure, forms a heteromeric complex with ERLIN2. In complex with ERLIN2, interacts with RNF170. Interacts with AMFR and SYVN1. In terms of processing, deubiquitinated by USP25; leading to stabilization. In terms of tissue distribution, expressed in heart, placenta, liver, kidney, pancreas, prostate, testis, ovary and small intestine.

It localises to the endoplasmic reticulum membrane. Component of the ERLIN1/ERLIN2 complex which mediates the endoplasmic reticulum-associated degradation (ERAD) of inositol 1,4,5-trisphosphate receptors (IP3Rs). Involved in regulation of cellular cholesterol homeostasis by regulation the SREBP signaling pathway. Binds cholesterol and may promote ER retention of the SCAP-SREBF complex. In terms of biological role, (Microbial infection) Required early in hepatitis C virus (HCV) infection to initiate RNA replication, and later in the infection to support infectious virus production. The protein is Erlin-1 of Homo sapiens (Human).